A 267-amino-acid polypeptide reads, in one-letter code: Levodione reductase (267 aa).

Residue 17–42 (LITGGGSGLGRATAVRLAAEGAKLSL) coordinates NAD(+). Substrate is bound at residue Ser-152. The Proton acceptor role is filled by Tyr-165.

Belongs to the short-chain dehydrogenases/reductases (SDR) family.

It carries out the reaction (4R)-hydroxy-(6R)-2,2,6-trimethylcyclohexanone + NAD(+) = (6R)-2,2,6-trimethyl-1,4-cyclohexanedione + NADH + H(+). With respect to regulation, strongly activated by monovalent cations, such as K(+), Na(+), and NH4(+). In terms of biological role, catalyzes the regio- and stereoselective reversible NAD-dependent reduction of (6R)-2,2,6-trimethyl-1,4-cyclohexanedione (levodione) to (4R,6R)-4-hydroxy-2,2,6-trimethylcyclohexanone (actinol). This chain is Levodione reductase (lvr), found in Leifsonia aquatica (Corynebacterium aquaticum).